The sequence spans 164 residues: Nucleotide-binding protein Acid345_2028 (164 aa).

It belongs to the YajQ family.

Nucleotide-binding protein. The chain is Nucleotide-binding protein Acid345_2028 from Koribacter versatilis (strain Ellin345).